Reading from the N-terminus, the 320-residue chain is Thiamine thiazole synthase (320 aa).

Residues Cys-82, Glu-103–Ala-104, Gly-111, and Val-176 each bind substrate. A 2,3-didehydroalanine (Cys) modification is found at Cys-209. Residues Asp-211, His-226, Met-278, and Arg-288 to Gly-290 each bind substrate.

The protein belongs to the THI4 family. In terms of assembly, homooctamer. Requires Fe cation as cofactor. In terms of processing, during the catalytic reaction, a sulfide is transferred from Cys-209 to a reaction intermediate, generating a dehydroalanine residue.

The protein resides in the cytoplasm. The protein localises to the nucleus. It carries out the reaction [ADP-thiazole synthase]-L-cysteine + glycine + NAD(+) = [ADP-thiazole synthase]-dehydroalanine + ADP-5-ethyl-4-methylthiazole-2-carboxylate + nicotinamide + 3 H2O + 2 H(+). In terms of biological role, involved in biosynthesis of the thiamine precursor thiazole. Catalyzes the conversion of NAD and glycine to adenosine diphosphate 5-(2-hydroxyethyl)-4-methylthiazole-2-carboxylic acid (ADT), an adenylated thiazole intermediate. The reaction includes an iron-dependent sulfide transfer from a conserved cysteine residue of the protein to a thiazole intermediate. The enzyme can only undergo a single turnover, which suggests it is a suicide enzyme. May have additional roles in adaptation to various stress conditions and in DNA damage tolerance. This is Thiamine thiazole synthase (sti35) from Fusarium oxysporum f. sp. lycopersici (strain 4287 / CBS 123668 / FGSC 9935 / NRRL 34936) (Fusarium vascular wilt of tomato).